The primary structure comprises 509 residues: FAD-linked oxidoreductase dpmaF (509 aa).

An N-terminal signal peptide occupies residues 1–21; it reads MTRLSLQLIAGLAGQAWLVNS. An FAD-binding PCMH-type domain is found at 59–231; it reads LQYEPIAVAV…AEYGFETFPA (173 aa). N-linked (GlcNAc...) asparagine glycosylation is found at N125, N193, and N281.

Belongs to the oxygen-dependent FAD-linked oxidoreductase family. FAD is required as a cofactor.

It participates in secondary metabolite biosynthesis; terpenoid biosynthesis. Its function is as follows. FAD-linked oxidoreductase; part of the gene cluster that mediates the biosynthesis of the diterpenoid pyrones subglutinols A and B. The first step of the pathway is the synthesis of the alpha-pyrone moiety by the polyketide synthase dpmaA via condensation of one acetyl-CoA starter unit with 3 malonyl-CoA units and 2 methylations. The alpha-pyrone is then combined with geranylgeranyl pyrophosphate (GGPP) formed by the GGPP synthase dpmaD through the action of the prenyltransferase dpmaC to yield a linear alpha-pyrone diterpenoid. Subsequent steps in the diterpenoid pyrone biosynthetic pathway involve the decalin core formation, which is initiated by the epoxidation of the C10-C11 olefin by the FAD-dependent oxidoreductase dpmaE, and is followed by a cyclization cascade catalyzed by the terpene cyclase dpmaB. The dehydrogenase dpmaF is then involved in tetrahydrofuran (THF) ring formation at the C5 unit to complete the formation of subglutinols A and B. The protein is FAD-linked oxidoreductase dpmaF of Metarhizium anisopliae (Entomophthora anisopliae).